We begin with the raw amino-acid sequence, 74 residues long: Delta-stichotoxin-Sgt2a (74 aa).

Positions 1–19 (MNRLIILVFAAVFLTLASA) are cleaved as a signal peptide. The propeptide occupies 20-28 (EVSEDVNMA). 3 cysteine pairs are disulfide-bonded: C34-C71, C36-C64, and C57-C72.

The protein belongs to the sea anemone sodium channel inhibitory toxin family. Type I subfamily.

Its subcellular location is the secreted. It is found in the nematocyst. Binds specifically to voltage-gated sodium channels (Nav), thereby delaying their inactivation during signal transduction. The chain is Delta-stichotoxin-Sgt2a from Stichodactyla gigantea (Giant carpet anemone).